Reading from the N-terminus, the 631-residue chain is RING finger protein 112 (631 aa).

The segment at 57 to 98 (CSICLERLRDPISLDCGHDFCIRCFSTHRLPGCEPPCCPECR) adopts an RING-type zinc-finger fold. An interaction with ZBTB16 region spans residues 131-631 (PVRAEPLLLV…GDREPLLQEE (501 aa)). The region spanning 166–397 (DTPVCLLAVL…YVSDVLSAAP (232 aa)) is the GB1/RHD3-type G domain. Residue 318-319 (RD) participates in GTP binding. A run of 2 helical transmembrane segments spans residues 547–567 (LAAV…GVVG) and 580–600 (GMVA…GGGV).

The protein belongs to the TRAFAC class dynamin-like GTPase superfamily. GB1/RHD3 GTPase family. GB1 subfamily. In terms of assembly, self-associates. Interacts with SP1 in an oxidative stress-regulated manner. Interacts with SIGMAR1 in an oxidative stress-regulated manner. Interacts with ZBTB16 (via C2H2-type zinc finger domains 1 and 2). Auto-ubiquitinated. Predominantly expressed in brain. Decreased expression in glioma brain tumors as compared to normal brains (at protein level).

Its subcellular location is the membrane. The protein resides in the cytoplasm. It localises to the nucleus. It is found in the nuclear body. The protein localises to the nucleoplasm. Its subcellular location is the endosome. The protein resides in the cytoplasmic vesicle. It localises to the secretory vesicle. It is found in the synaptic vesicle. The protein localises to the postsynaptic density. Its subcellular location is the perikaryon. The protein resides in the cell projection. It localises to the neuron projection. It catalyses the reaction S-ubiquitinyl-[E2 ubiquitin-conjugating enzyme]-L-cysteine + [acceptor protein]-L-lysine = [E2 ubiquitin-conjugating enzyme]-L-cysteine + N(6)-ubiquitinyl-[acceptor protein]-L-lysine.. The protein operates within protein modification; protein ubiquitination. Its function is as follows. E3 ubiquitin-protein ligase that plays an important role in neuronal differentiation, including neurogenesis and gliogenesis, during brain development. During embryonic development initiates neuronal differentiation by inducing cell cycle arrest at the G0/G1 phase through up-regulation of cell-cycle regulatory proteins. Plays a role not only in the fetal period during the development of the nervous system, but also in the adult brain, where it is involved in the maintenance of neural functions and protection of the nervous tissue cells from oxidative stress-induced damage. Exhibits GTPase and E3 ubiquitin-protein ligase activities. Regulates dendritic spine density and synaptic neurotransmission; its ability to hydrolyze GTP is involved in the maintenance of dendritic spine density. The protein is RING finger protein 112 (RNF112) of Homo sapiens (Human).